The primary structure comprises 571 residues: MGIKGLLGLLKPMQKSSHVEEFSGKTLGVDGYVWLHKAVFTCAHELAFNKETDKYLKYAIHQALMLQYYGVKPLIVFDGGPLPCKASTEQKRKERRQEAFELGKKLWDEGKKSQAIMQFSRCVDVTPEMAWKLIIALREHGIESIVAPYEADAQLVYLEKENIIDGIITEDSDMLVFGAQTVLFKMDGFGNCITIRRNDIANAQDLNLRLPIEKLRHMAIFSGCDYTDGVAGMGLKTALRYLQKYPEPRAAIRAMRLDKSLKVPVSFEKEFALADLAFRHQRVYCPKDKTLVHLSPPERELSVHEDAFIGSFFDNQLAIDIAEGRSNPITKCAFDIKDSSMQSFTKTTITISKRKGISKTDISNFFMKSIPPSKRPTKSTSLIDVTNVKVQRTHLANDISSEKQSIKSANEKAYVTPKSNSLKPGFGKSLSDISNSATKNENVPFLPPRTGVSKYFKLQKNTEKEIDEQVPSQSNNTTPTSAKSDSASPQNWFSSFSYQTPNSASPPFSSLSHTLPISALAKIGHDALNRKNHASLPSRRIVYKPPSSPSTPISMNPRPKGILSLQQYKFR.

An N-domain region spans residues 1 to 96; that stretch reads MGIKGLLGLL…STEQKRKERR (96 aa). 7 residues coordinate Mg(2+): D30, D78, E150, D152, D171, D173, and D225. Residues 114 to 245 are I-domain; the sequence is QAIMQFSRCV…KTALRYLQKY (132 aa). Disordered regions lie at residues 464-489 and 530-559; these read KEID…SASP and RKNH…NPRP. Polar residues predominate over residues 470–489; sequence VPSQSNNTTPTSAKSDSASP.

Belongs to the XPG/RAD2 endonuclease family. EXO1 subfamily. Monomer. Mg(2+) serves as cofactor.

It localises to the nucleus. Functionally, 5'-&gt;3' double-stranded DNA exonuclease that could act in a pathway that corrects mismatched base pairs. The protein is Exodeoxyribonuclease 1 (exo1) of Schizosaccharomyces pombe (strain 972 / ATCC 24843) (Fission yeast).